Reading from the N-terminus, the 86-residue chain is Small ribosomal subunit protein uS17 (86 aa).

Belongs to the universal ribosomal protein uS17 family. In terms of assembly, part of the 30S ribosomal subunit.

Functionally, one of the primary rRNA binding proteins, it binds specifically to the 5'-end of 16S ribosomal RNA. The protein is Small ribosomal subunit protein uS17 of Caldicellulosiruptor bescii (strain ATCC BAA-1888 / DSM 6725 / KCTC 15123 / Z-1320) (Anaerocellum thermophilum).